We begin with the raw amino-acid sequence, 390 residues long: L-rhamnonate dehydratase (390 aa).

Substrate contacts are provided by histidine 19 and arginine 45. Mg(2+)-binding residues include aspartate 211, glutamate 237, and glutamate 265. Histidine 315 serves as the catalytic Proton acceptor. Residue glutamate 335 coordinates substrate.

The protein belongs to the mandelate racemase/muconate lactonizing enzyme family. RhamD subfamily. Mg(2+) serves as cofactor.

It carries out the reaction L-rhamnonate = 2-dehydro-3-deoxy-L-rhamnonate + H2O. Its function is as follows. Catalyzes the dehydration of L-rhamnonate to 2-keto-3-deoxy-L-rhamnonate (KDR). This Saccharopolyspora erythraea (strain ATCC 11635 / DSM 40517 / JCM 4748 / NBRC 13426 / NCIMB 8594 / NRRL 2338) protein is L-rhamnonate dehydratase.